Reading from the N-terminus, the 323-residue chain is RNA polymerase sigma factor SigB (323 aa).

The segment at 1 to 228 (MADAPTRATT…DMPVGSEEEA (228 aa)) is sufficient to interact with RbpA. A sigma-70 factor domain-1 region spans residues 25–59 (DLVRVYLNGIGKTALLNAAGEVELAKRIEAGLYAE). The tract at residues 90–160 (LLEANLRLVV…TRGMADQSRT (71 aa)) is sigma-70 factor domain-2. The Polymerase core binding signature appears at 114–117 (DLIQ). The interval 169 to 245 (EQVNKLARIK…DAEAMSAENA (77 aa)) is sigma-70 factor domain-3. A sigma-70 factor domain-4 region spans residues 258 to 311 (VLATLDEREHQVIRLRFGLDDGQPRTLDQIGKLFGLSRERVRQIERDVMSKLRH). The H-T-H motif DNA-binding region spans 284–303 (LDQIGKLFGLSRERVRQIER).

Belongs to the sigma-70 factor family. Monomer. Interacts transiently with the RNA polymerase catalytic core formed by RpoA, RpoB, RpoC and RpoZ (2 alpha, 1 beta, 1 beta' and 1 omega subunit) to form the RNA polymerase holoenzyme that can initiate transcription.

In terms of biological role, sigma factors are initiation factors that promote the attachment of RNA polymerase to specific initiation sites and are then released. A non-essential principal sigma factor that responds to cell envelope stress and hypoxia. This Mycobacterium tuberculosis (strain CDC 1551 / Oshkosh) protein is RNA polymerase sigma factor SigB (sigB).